A 363-amino-acid chain; its full sequence is NADH-quinone oxidoreductase subunit H (363 aa).

10 helical membrane passes run 29–49 (VLKI…YVVW), 62–82 (GPMY…KLLF), 94–114 (AIFV…WAVV), 127–147 (VGLL…ILAG), 166–186 (VVSY…AAGS), 202–222 (FFDW…VSGV), 239–257 (IVAG…LFFL), 264–286 (ILVS…QGWV), 293–313 (LIDW…LFFA), and 339–359 (FIPL…SGVI).

Belongs to the complex I subunit 1 family. In terms of assembly, NDH-1 is composed of 14 different subunits. Subunits NuoA, H, J, K, L, M, N constitute the membrane sector of the complex.

It is found in the cell inner membrane. The enzyme catalyses a quinone + NADH + 5 H(+)(in) = a quinol + NAD(+) + 4 H(+)(out). NDH-1 shuttles electrons from NADH, via FMN and iron-sulfur (Fe-S) centers, to quinones in the respiratory chain. The immediate electron acceptor for the enzyme in this species is believed to be ubiquinone. Couples the redox reaction to proton translocation (for every two electrons transferred, four hydrogen ions are translocated across the cytoplasmic membrane), and thus conserves the redox energy in a proton gradient. This subunit may bind ubiquinone. This is NADH-quinone oxidoreductase subunit H from Xylella fastidiosa (strain Temecula1 / ATCC 700964).